We begin with the raw amino-acid sequence, 443 residues long: MESLFKRPFMVYGLAAGLRTVLLFYGAWQDAHSAVKYTDIDYMVFTDASRYVSQGDSPYARDTYRYTPLLAWMLLPTTWAIPGFFSFGKALFALSDVVAGWLVAKSLTLTHGMSAERALKYASFWLLNPMVANISTRGSSEGLLGVLVVALLWAVLNRRIYLGGVLLGIGVHFKIYPFIYGMSILWWLDEKEFTTNKAQSESREVKPKFKDTPVGIFISQILSFITPCRIRLTLISLLTFVALNAAMYLHYGTPFLQHTYLHHLTRIDHRHNFSPYSTLLYLTAASSAGAVGHDAGGPSGSFESLAFIPQLLISVVVIPLVLGKKDLPGTMLAQTFAFVTFNKVCTSQYFLWYLIFLPFYLPTSSLLRNPRLGIAVAALWILGQALWLQQGYLLEFLGISSFLPGLFLASLGFFAVNAWILGVIVADVGGLNLESGNEKRRVK.

Helical transmembrane passes span 8–28 (PFMV…YGAW), 68–88 (PLLA…FSFG), 90–110 (ALFA…LTLT), 136–156 (TRGS…WAVL), 160–180 (IYLG…PFIY), 232–252 (LTLI…LHYG), 273–291 (FSPY…AGAV), 302–322 (FESL…PLVL), 347–367 (SQYF…SSLL), 374–394 (IAVA…GYLL), and 406–426 (LFLA…VIVA).

It belongs to the PIGM family.

The protein localises to the endoplasmic reticulum membrane. The protein operates within glycolipid biosynthesis; glycosylphosphatidylinositol-anchor biosynthesis. In terms of biological role, mannosyltransferase involved in glycosylphosphatidylinositol-anchor biosynthesis. Transfers the first alpha-1,4-mannose to GlcN-acyl-PI during GPI precursor assembly. Required for cell wall integrity. The protein is GPI mannosyltransferase 1 (gpi14) of Emericella nidulans (strain FGSC A4 / ATCC 38163 / CBS 112.46 / NRRL 194 / M139) (Aspergillus nidulans).